The following is a 1452-amino-acid chain: CLIP-associating protein 1 (1452 aa).

HEAT repeat units follow at residues 68-87 (LLGMDILSALVTRLQDRFRS), 88-124 (QIGTVLPSLMDRLGDAKDSVREQDQNLLIKIMEQASN), and 163-200 (LTLSKIVPHICNLLGDPNSQVRDAAINCLVEIYRHVGE). The tract at residues 239-299 (KNFDDEDSVD…GTAKEGAGGV (61 aa)) is disordered. Low complexity predominate over residues 253-267 (SSASSSASSKAPQAA). 2 HEAT repeats span residues 407–442 (HGAEAIMPTVFNLVPNSAKIMATSGVVAIRLIIRQT) and 443–479 (HVPRLIPIITSNCTSKSVAVRRRCYEFLDLLLQEWQT). Disordered stretches follow at residues 545–735 (SDSI…GISQ) and 771–792 (YGMYSDDDANSDASSACSERSY). Residues 550 to 569 (SLPQSDRSSSSSQESLNRPL) are compositionally biased toward low complexity. Polar residues predominate over residues 573-597 (RSPTGSTVSRASTATSKSTPGSLQR). Composition is skewed to low complexity over residues 606-621 (AATCAKSKATSGASAA), 645-659 (QSSGSTTSTASTPAD), and 668-682 (VVSQSQPGSRSSSPG). Positions 715 to 724 (QGCSRETSPS) are enriched in polar residues. Residues 781 to 792 (SDASSACSERSY) show a composition bias toward low complexity. The HEAT 6 repeat unit spans residues 926-963 (QQFNILMRFIVDQTQTPNLKVKVAILKYIESLARQMDP). Residues 1033 to 1076 (LKNSSNSSMGSPSNTIGRTPSRHSSSRASPLTSPTNCSHGGLSP) are disordered. The span at 1034 to 1046 (KNSSNSSMGSPSN) shows a compositional bias: low complexity. The span at 1058–1070 (SRASPLTSPTNCS) shows a compositional bias: polar residues. HEAT repeat units lie at residues 1256 to 1293 (EHFKTILLLLLETLGDKDHAIRALALRVLREILRNQPA) and 1374 to 1411 (QILPDIIPGLLQGYDNTESSVRKASVFCLVAIYSVIGE).

Belongs to the CLASP family. As to quaternary structure, interacts (via C-terminus) with clip1/clip-170, and cenpe.

The protein localises to the cytoplasm. It localises to the cytoskeleton. Its subcellular location is the microtubule organizing center. The protein resides in the centrosome. It is found in the chromosome. The protein localises to the centromere. It localises to the kinetochore. Its subcellular location is the spindle. The protein resides in the golgi apparatus. It is found in the trans-Golgi network. In terms of biological role, microtubule plus-end tracking protein that promotes the stabilization of dynamic microtubules during anaphase. Plays a crucial role in chromatin-induced microtubule formation. May also act at microtubule minus ends. May be involved in the nucleation of noncentrosomal microtubules originating from the trans-Golgi network (TGN). In Xenopus tropicalis (Western clawed frog), this protein is CLIP-associating protein 1.